Consider the following 812-residue polypeptide: Chromosome alignment-maintaining phosphoprotein 1 (812 aa).

The residue at position 1 (M1) is an N-acetylmethionine. Positions 86–105 (ASPDKWNDKPKNQLNKETDP) are enriched in basic and acidic residues. Disordered regions lie at residues 86 to 124 (ASPD…SAEP) and 136 to 546 (KLGS…PEAR). Phosphoserine occurs at positions 87, 108, 173, 184, 204, 214, and 217. The segment covering 202–213 (VPSPEPQKPAPV) has biased composition (pro residues). Polar residues predominate over residues 220-233 (ATLSNPKPQKQSHF). S244, S247, S253, S264, S275, S282, S286, S297, S308, S319, S344, S355, S376, S382, and S386 each carry phosphoserine. The tract at residues 271–490 (ARTTSPEPRK…KSSFFIEPQK (220 aa)) is mediates interaction with MAD2L2. Positions 284–297 (SESPEPWKPFPAVS) are enriched in pro residues. Residues 336–361 (PAKPAPSVSPGPWKPIPSVSPGPWKP) show a composition bias toward pro residues. The span at 363–392 (PSVSSASWKSSSVSPSSWKSPPASPESWKS) shows a compositional bias: low complexity. Phosphothreonine is present on T403. 8 positions are modified to phosphoserine: S405, S416, S427, S432, S436, S443, S445, and S452. The tract at residues 451 to 590 (LSPDQRKTSP…ELQIDAIDDQ (140 aa)) is mediates localization to the spindle and the kinetochore and is required for the attachment of spindle microtubules to the kinetochore. T458 carries the post-translational modification Phosphothreonine. 4 positions are modified to phosphoserine: S459, S462, S472, and S476. Residue K490 is modified to N6-acetyllysine; alternate. K490 participates in a covalent cross-link: Glycyl lysine isopeptide (Lys-Gly) (interchain with G-Cter in SUMO2); alternate. The span at 499–512 (PGPSGPSESPKAAS) shows a compositional bias: low complexity. A phosphoserine mark is found at S507, S512, and S542. Residue K565 forms a Glycyl lysine isopeptide (Lys-Gly) (interchain with G-Cter in SUMO2) linkage. Phosphoserine occurs at positions 572 and 603. Residues 591–812 (KCDILVQEEL…LEPPLEEQQI (222 aa)) form a mediates localization to the chromosome and the spindle and negatively regulates chromosome alignment region. Residue K606 forms a Glycyl lysine isopeptide (Lys-Gly) (interchain with G-Cter in SUMO2) linkage. Phosphoserine is present on residues S615, S626, S627, and S632. K638 is covalently cross-linked (Glycyl lysine isopeptide (Lys-Gly) (interchain with G-Cter in SUMO2)). Residues S651, S652, and S653 each carry the phosphoserine modification. K670 is covalently cross-linked (Glycyl lysine isopeptide (Lys-Gly) (interchain with G-Cter in SUMO2)). Residue S675 is modified to Phosphoserine. K689 is covalently cross-linked (Glycyl lysine isopeptide (Lys-Gly) (interchain with G-Cter in SUMO2)). Residue S736 is modified to Phosphoserine. A C2H2-type zinc finger spans residues 738-760 (YKCTICGKAFLLESLLKNHVAAH).

As to quaternary structure, interacts with MAD2L2. Interacts with POGZ, CBX1, CBX3 and CBX5. Post-translationally, phosphorylated by CDK1. Mitotic phosphorylation is required for the attachment of spindle microtubules to the kinetochore.

It localises to the nucleus. The protein localises to the chromosome. Its subcellular location is the centromere. It is found in the kinetochore. The protein resides in the cytoplasm. It localises to the cytoskeleton. The protein localises to the spindle. Its function is as follows. Required for proper alignment of chromosomes at metaphase and their accurate segregation during mitosis. Involved in the maintenance of spindle microtubules attachment to the kinetochore during sister chromatid biorientation. May recruit CENPE and CENPF to the kinetochore. In Homo sapiens (Human), this protein is Chromosome alignment-maintaining phosphoprotein 1 (CHAMP1).